Reading from the N-terminus, the 127-residue chain is Small ribosomal subunit protein uS13 (127 aa).

The interval Pro-97–Lys-127 is disordered. Basic residues predominate over residues Gln-101 to Lys-127.

Belongs to the universal ribosomal protein uS13 family. In terms of assembly, part of the 30S ribosomal subunit. Forms a loose heterodimer with protein S19. Forms two bridges to the 50S subunit in the 70S ribosome.

In terms of biological role, located at the top of the head of the 30S subunit, it contacts several helices of the 16S rRNA. In the 70S ribosome it contacts the 23S rRNA (bridge B1a) and protein L5 of the 50S subunit (bridge B1b), connecting the 2 subunits; these bridges are implicated in subunit movement. Contacts the tRNAs in the A and P-sites. The protein is Small ribosomal subunit protein uS13 of Gloeobacter violaceus (strain ATCC 29082 / PCC 7421).